Here is a 257-residue protein sequence, read N- to C-terminus: Coenzyme F420:L-glutamate ligase (257 aa).

Residues 9-12, 38-39, and Lys-43 each bind GTP; these read VPEV and ST. Residue Asp-113 coordinates a divalent metal cation. Asn-116 provides a ligand contact to GTP. The a divalent metal cation site is built by Asp-154, Thr-155, and Glu-212. Position 210 to 217 (210 to 217) interacts with GTP; it reads TGEGDGGT.

It belongs to the CofE family. As to quaternary structure, homodimer. Requires Mg(2+) as cofactor. The cofactor is Mn(2+). It depends on K(+) as a cofactor.

It carries out the reaction oxidized coenzyme F420-0 + GTP + L-glutamate = oxidized coenzyme F420-1 + GDP + phosphate + H(+). The catalysed reaction is oxidized coenzyme F420-1 + GTP + L-glutamate = oxidized coenzyme F420-2 + GDP + phosphate + H(+). It participates in cofactor biosynthesis; coenzyme F420 biosynthesis. Functionally, catalyzes the GTP-dependent successive addition of two or more gamma-linked L-glutamates to the L-lactyl phosphodiester of 7,8-didemethyl-8-hydroxy-5-deazariboflavin (F420-0) to form coenzyme F420-0-glutamyl-glutamate (F420-2) or polyglutamated F420 derivatives. The protein is Coenzyme F420:L-glutamate ligase of Haloarcula marismortui (strain ATCC 43049 / DSM 3752 / JCM 8966 / VKM B-1809) (Halobacterium marismortui).